The primary structure comprises 353 residues: Photosystem II protein D1 (353 aa).

The residue at position 2 (T2) is an N-acetylthreonine. T2 carries the post-translational modification Phosphothreonine. A run of 3 helical transmembrane segments spans residues 29-46 (YVGW…TAVS), 118-133 (HFFL…EWEL), and 142-156 (WIAV…AATA). H118 is a binding site for chlorophyll a. Residue Y126 participates in pheophytin a binding. [CaMn4O5] cluster is bound by residues D170 and E189. A helical membrane pass occupies residues 197–218 (FHMLGVAGVFGGSLFSAMHGSL). H198 provides a ligand contact to chlorophyll a. A quinone-binding positions include H215 and 264–265 (SF). H215 provides a ligand contact to Fe cation. H272 contacts Fe cation. Residues 274–288 (FLAAWPVVGIWFTAL) form a helical membrane-spanning segment. [CaMn4O5] cluster is bound by residues H332, E333, D342, and A344. Residues 345 to 353 (SVEAPSING) constitute a propeptide that is removed on maturation.

Belongs to the reaction center PufL/M/PsbA/D family. As to quaternary structure, PSII is composed of 1 copy each of membrane proteins PsbA, PsbB, PsbC, PsbD, PsbE, PsbF, PsbH, PsbI, PsbJ, PsbK, PsbL, PsbM, PsbT, PsbX, PsbY, PsbZ, Psb30/Ycf12, at least 3 peripheral proteins of the oxygen-evolving complex and a large number of cofactors. It forms dimeric complexes. Requires The D1/D2 heterodimer binds P680, chlorophylls that are the primary electron donor of PSII, and subsequent electron acceptors. It shares a non-heme iron and each subunit binds pheophytin, quinone, additional chlorophylls, carotenoids and lipids. D1 provides most of the ligands for the Mn4-Ca-O5 cluster of the oxygen-evolving complex (OEC). There is also a Cl(-1) ion associated with D1 and D2, which is required for oxygen evolution. The PSII complex binds additional chlorophylls, carotenoids and specific lipids. as cofactor. Post-translationally, tyr-161 forms a radical intermediate that is referred to as redox-active TyrZ, YZ or Y-Z. C-terminally processed by CTPA; processing is essential to allow assembly of the oxygen-evolving complex and thus photosynthetic growth.

The protein localises to the plastid. The protein resides in the chloroplast thylakoid membrane. The enzyme catalyses 2 a plastoquinone + 4 hnu + 2 H2O = 2 a plastoquinol + O2. Photosystem II (PSII) is a light-driven water:plastoquinone oxidoreductase that uses light energy to abstract electrons from H(2)O, generating O(2) and a proton gradient subsequently used for ATP formation. It consists of a core antenna complex that captures photons, and an electron transfer chain that converts photonic excitation into a charge separation. The D1/D2 (PsbA/PsbD) reaction center heterodimer binds P680, the primary electron donor of PSII as well as several subsequent electron acceptors. This is Photosystem II protein D1 from Tupiella akineta (Green alga).